The primary structure comprises 229 residues: Protein TraJ (229 aa).

Its subcellular location is the cytoplasm. Its function is as follows. This protein is essential for positively regulating the expression of transfer genes that are involved in the conjugal transfer of DNA between bacterial cells. The sequence is that of Protein TraJ (traJ) from Escherichia coli (strain K12).